The chain runs to 1414 residues: DNA-directed RNA polymerase subunit beta' (1414 aa).

The Zn(2+) site is built by Cys70, Cys72, Cys85, and Cys88. Mg(2+) is bound by residues Asp460, Asp462, and Asp464. 4 residues coordinate Zn(2+): Cys819, Cys893, Cys900, and Cys903. Residues 1391 to 1414 (AEEAFDFGTPSAPAEEPQQHPAAE) are disordered. The span at 1400 to 1414 (PSAPAEEPQQHPAAE) shows a compositional bias: low complexity.

The protein belongs to the RNA polymerase beta' chain family. As to quaternary structure, the RNAP catalytic core consists of 2 alpha, 1 beta, 1 beta' and 1 omega subunit. When a sigma factor is associated with the core the holoenzyme is formed, which can initiate transcription. The cofactor is Mg(2+). It depends on Zn(2+) as a cofactor.

The enzyme catalyses RNA(n) + a ribonucleoside 5'-triphosphate = RNA(n+1) + diphosphate. DNA-dependent RNA polymerase catalyzes the transcription of DNA into RNA using the four ribonucleoside triphosphates as substrates. This chain is DNA-directed RNA polymerase subunit beta', found in Burkholderia lata (strain ATCC 17760 / DSM 23089 / LMG 22485 / NCIMB 9086 / R18194 / 383).